Consider the following 610-residue polypeptide: Myoneurin (610 aa).

The BTB domain occupies 24 to 89 (CDCTVVIGEF…IYTGTLNLDS (66 aa)). The interval 156–199 (SEVSTDSVQANPKPRALTKKSSQSKKKKKAFSSQKPGQSKAVQY) is disordered. The segment covering 171 to 185 (ALTKKSSQSKKKKKA) has biased composition (basic residues). 2 consecutive short sequence motifs (nuclear localization signal) follow at residues 174 to 190 (KKSS…SSQK) and 257 to 262 (KRKRRK). 8 consecutive C2H2-type zinc fingers follow at residues 302 to 324 (PMCN…MRIH), 330 to 352 (YVCH…VRTH), 358 to 381 (YKCE…RMHH), 387 to 409 (YKCD…ARKH), 415 to 437 (YVCD…VRRH), 443 to 465 (YVCD…SRKH), 471 to 493 (YICG…FRSH), and 499 to 522 (FICE…TKVH). A disordered region spans residues 519–548 (TKVHSGTDKNPDCSVDDHAVSEQDSVQRSP). Residues 523-539 (SGTDKNPDCSVDDHAVS) are compositionally biased toward basic and acidic residues.

Belongs to the krueppel C2H2-type zinc-finger protein family. In terms of tissue distribution, mainly expressed in the neuromuscular system. Located in and around synaptic myonuclei in adult muscle. Expression is dysregulated after nerve injury. Also found in the cerebellum, testis, heart, brain and liver.

It is found in the nucleus. This chain is Myoneurin (Mynn), found in Mus musculus (Mouse).